Consider the following 450-residue polypeptide: MKTVTEFQNKNILVLGIAKSGYAAATLLQKLGANVIVNDGKPLAENVLAAELQAKGMDVVCGGHPLELLERNISLVVKNPGIPYSNPILVAAKEKQIPIVTEVELAYRISEAPFVGITGSNGKTTTTMLTFEMLKEGQKHPVIAGNIGTVACEVAQDAKENEVVVTELSSFQLMGVELFQPKIAAFLNLFEAHLDYHGTKKEYGLAKANIFKNQTENDYSVINADDADVMALSAYSKGQKILFSTTKEIEDGACIKDNALYFKGEKVVEVSDIVLPGQHNLENILAAMSIAKLLGTSNEAITVVLKRFTGVKHRLEYVTTINNRKFYNDSKATNMLATEKALSAFTQPIVLLAGGLDRGNEFDDLIPYFKNVKAIVTFGQTAPKLVRAAEKAGLDIIESVDTLDEAVVKAYAHSKDGDVVLLSPACASWDQFKTFEERGDIFIQAVHKLI.

119-125 (GSNGKTT) is a binding site for ATP.

Belongs to the MurCDEF family.

It localises to the cytoplasm. The catalysed reaction is UDP-N-acetyl-alpha-D-muramoyl-L-alanine + D-glutamate + ATP = UDP-N-acetyl-alpha-D-muramoyl-L-alanyl-D-glutamate + ADP + phosphate + H(+). The protein operates within cell wall biogenesis; peptidoglycan biosynthesis. In terms of biological role, cell wall formation. Catalyzes the addition of glutamate to the nucleotide precursor UDP-N-acetylmuramoyl-L-alanine (UMA). In Bacillus cereus (strain B4264), this protein is UDP-N-acetylmuramoylalanine--D-glutamate ligase.